The following is a 1380-amino-acid chain: DNA-directed RNA polymerase subunit beta (1380 aa).

This sequence belongs to the RNA polymerase beta chain family. As to quaternary structure, the RNAP catalytic core consists of 2 alpha, 1 beta, 1 beta' and 1 omega subunit. When a sigma factor is associated with the core the holoenzyme is formed, which can initiate transcription.

The enzyme catalyses RNA(n) + a ribonucleoside 5'-triphosphate = RNA(n+1) + diphosphate. Functionally, DNA-dependent RNA polymerase catalyzes the transcription of DNA into RNA using the four ribonucleoside triphosphates as substrates. The polypeptide is DNA-directed RNA polymerase subunit beta (Ehrlichia chaffeensis (strain ATCC CRL-10679 / Arkansas)).